Here is a 111-residue protein sequence, read N- to C-terminus: MANIHQENEEMEQPMQNGEEDRPLGGGEGHQPAGNRRGQARRLAPNFRWAIPNRQINDGMGGDGDDMEIFMEEMREIRRKLRELQLRNCLRILMGELSNHHDHHDEFCLMP.

The segment at 1 to 63 (MANIHQENEE…RQINDGMGGD (63 aa)) is disordered. Residues 68-93 (EIFMEEMREIRRKLRELQLRNCLRIL) form an interaction with p75NTR/NGFR region. Positions 68-111 (EIFMEEMREIRRKLRELQLRNCLRILMGELSNHHDHHDEFCLMP) are interaction with 14-3-3 epsilon. A Nuclear export signal motif is present at residues 77 to 87 (IRRKLRELQLR). The segment at 100-104 (HHDHH) is his cluster. A Zn(2+)-binding site is contributed by Cys-108.

Belongs to the BEX family. In terms of assembly, self-associates. Binds to the DEATH domain of p75NTR/NGFR. Interacts with 14-3-3 epsilon (YWHAE). Interacts with DIABLO/SMAC. Ubiquitinated. Degraded by the proteasome. Found in ovarian granulosa cells, testis, prostate and seminal vesicle tissue. High levels also detected in liver.

Its subcellular location is the nucleus. It localises to the cytoplasm. The protein resides in the cytosol. Functionally, may be a signaling adapter molecule involved in NGFR/p75NTR-mediated apoptosis induced by NGF. Plays a role in zinc-triggered neuronal death. In absence of reductive stress, acts as a pseudosubstrate for the CRL2(FEM1B) complex: associates with FEM1B via zinc, thereby preventing association between FEM1B and its substrates. This Homo sapiens (Human) protein is Protein BEX3.